A 477-amino-acid chain; its full sequence is UDP-galactose-lipid carrier transferase (477 aa).

The next 6 helical transmembrane spans lie at 16–36, 52–72, 93–113, 115–135, 175–195, and 284–304; these read SLAL…IVLI, LDLK…WFWV, TILI…WELS, WIWI…RACV, VIAF…GVPV, and FDLV…VILI. Over 305-477 the chain is Cytoplasmic; the sequence is FMVSRDGGAP…GVVLKRDGAY (173 aa).

It belongs to the bacterial sugar transferase family.

It is found in the cell membrane. The protein operates within glycan metabolism; exopolysaccharide biosynthesis. Involved in the biosynthesis of amylovoran which functions as a virulence factor. May act as a sugar transferase and may be involved in the export of the repeating unit by flipping the lipid carrier to the periplasmic face of the inner membrane. The chain is UDP-galactose-lipid carrier transferase (amsG) from Erwinia amylovora (Fire blight bacteria).